The sequence spans 195 residues: Toxin protein Tse4 (195 aa).

A run of 4 helical transmembrane segments spans residues 20–40 (ASGGGMTVAFLAGSGGSITLL), 116–136 (YVELGAGVIAGGSGTAILFGL), 140–160 (LLAAVALASASPLTAALGASM), and 171–191 (ALLMAGVNVGAQFGGGAAAYL).

The protein resides in the host membrane. It localises to the secreted. Toxin secreted by the H1 type VI (H1-T6SS) secretion system into the periplasm of recipient cells. The chain is Toxin protein Tse4 from Pseudomonas aeruginosa (strain ATCC 15692 / DSM 22644 / CIP 104116 / JCM 14847 / LMG 12228 / 1C / PRS 101 / PAO1).